A 601-amino-acid polypeptide reads, in one-letter code: Elongation factor 4 (601 aa).

The tr-type G domain occupies 5 to 187; the sequence is IRKKNFCIIA…AICKHVPSPR (183 aa). GTP is bound by residues 17–22 and 134–137; these read DHGKST and NKID.

It belongs to the TRAFAC class translation factor GTPase superfamily. Classic translation factor GTPase family. LepA subfamily.

Its subcellular location is the cell inner membrane. The catalysed reaction is GTP + H2O = GDP + phosphate + H(+). In terms of biological role, required for accurate and efficient protein synthesis under certain stress conditions. May act as a fidelity factor of the translation reaction, by catalyzing a one-codon backward translocation of tRNAs on improperly translocated ribosomes. Back-translocation proceeds from a post-translocation (POST) complex to a pre-translocation (PRE) complex, thus giving elongation factor G a second chance to translocate the tRNAs correctly. Binds to ribosomes in a GTP-dependent manner. This chain is Elongation factor 4, found in Borrelia garinii subsp. bavariensis (strain ATCC BAA-2496 / DSM 23469 / PBi) (Borreliella bavariensis).